A 330-amino-acid polypeptide reads, in one-letter code: Beta-hexosaminidase (330 aa).

Residues Asp-62, Arg-70, Arg-130, and 160–161 (KH) each bind substrate. The Proton donor/acceptor role is filled by His-173. The Nucleophile role is filled by Asp-242.

It belongs to the glycosyl hydrolase 3 family. NagZ subfamily.

The protein resides in the cytoplasm. The enzyme catalyses Hydrolysis of terminal non-reducing N-acetyl-D-hexosamine residues in N-acetyl-beta-D-hexosaminides.. It participates in cell wall biogenesis; peptidoglycan recycling. Its function is as follows. Plays a role in peptidoglycan recycling by cleaving the terminal beta-1,4-linked N-acetylglucosamine (GlcNAc) from peptide-linked peptidoglycan fragments, giving rise to free GlcNAc, anhydro-N-acetylmuramic acid and anhydro-N-acetylmuramic acid-linked peptides. This Vibrio cholerae serotype O1 (strain ATCC 39541 / Classical Ogawa 395 / O395) protein is Beta-hexosaminidase.